Reading from the N-terminus, the 622-residue chain is Probable ATP-citrate synthase (622 aa).

ATP contacts are provided by residues 228 to 248 and 279 to 305; these read ALRY…ELGG and FPTE…KNKA. Position 245 (E245) interacts with Mg(2+). Catalysis depends on H287, which acts as the Tele-phosphohistidine intermediate. Residue 306-316 participates in CoA binding; it reads LREAGAVVPTS.

In the N-terminal section; belongs to the succinate/malate CoA ligase beta subunit family. This sequence in the C-terminal section; belongs to the succinate/malate CoA ligase alpha subunit family. Homotetramer.

The protein localises to the cytoplasm. It carries out the reaction oxaloacetate + acetyl-CoA + ADP + phosphate = citrate + ATP + CoA. In terms of biological role, catalyzes the cleavage of citrate into oxaloacetate and acetyl-CoA, the latter serving as common substrate in multiple biochemical reactions in protein, carbohydrate and lipid metabolism. The sequence is that of Probable ATP-citrate synthase (acly) from Dictyostelium discoideum (Social amoeba).